The chain runs to 159 residues: Putative 4-hydroxy-4-methyl-2-oxoglutarate aldolase (159 aa).

Substrate-binding positions include 74-77 and R96; that span reads GDNL. A divalent metal cation is bound at residue D97.

Belongs to the class II aldolase/RraA-like family. Homotrimer. It depends on a divalent metal cation as a cofactor.

It carries out the reaction 4-hydroxy-4-methyl-2-oxoglutarate = 2 pyruvate. The catalysed reaction is oxaloacetate + H(+) = pyruvate + CO2. Catalyzes the aldol cleavage of 4-hydroxy-4-methyl-2-oxoglutarate (HMG) into 2 molecules of pyruvate. Also contains a secondary oxaloacetate (OAA) decarboxylase activity due to the common pyruvate enolate transition state formed following C-C bond cleavage in the retro-aldol and decarboxylation reactions. This chain is Putative 4-hydroxy-4-methyl-2-oxoglutarate aldolase, found in Bacillus anthracis.